The chain runs to 1099 residues: Carbamoyl phosphate synthase large chain (1099 aa).

The interval 1–402 is carboxyphosphate synthetic domain; it reads MPKREDIKRI…ALGKALRSLE (402 aa). ATP contacts are provided by arginine 129, arginine 169, glycine 175, glycine 176, glutamate 208, valine 210, glutamate 215, glycine 241, isoleucine 242, histidine 243, glutamine 285, and glutamate 299. The ATP-grasp 1 domain maps to 133–328; the sequence is KETMEKAGLE…IAKVAALLAV (196 aa). 3 residues coordinate Mg(2+): glutamine 285, glutamate 299, and asparagine 301. Residues glutamine 285, glutamate 299, and asparagine 301 each contribute to the Mn(2+) site. An oligomerization domain region spans residues 403 to 541; the sequence is LDAAPKLDLE…STYNGVENEA (139 aa). The tract at residues 542–944 is carbamoyl phosphate synthetic domain; the sequence is VPSDREKIMI…AFAKAQIAAG (403 aa). Residues 666–857 enclose the ATP-grasp 2 domain; that stretch reads AKLLKQIGLK…VARIAAKIMV (192 aa). 10 residues coordinate ATP: arginine 702, lysine 741, leucine 743, glutamate 748, glycine 773, valine 774, histidine 775, serine 776, glutamine 816, and glutamate 828. Mg(2+)-binding residues include glutamine 816, glutamate 828, and asparagine 830. The Mn(2+) site is built by glutamine 816, glutamate 828, and asparagine 830. Residues 945-1099 form the MGS-like domain; that stretch reads NPLPTTGAIL…VRRLTDTWKM (155 aa). The interval 945–1099 is allosteric domain; it reads NPLPTTGAIL…VRRLTDTWKM (155 aa).

It belongs to the CarB family. As to quaternary structure, composed of two chains; the small (or glutamine) chain promotes the hydrolysis of glutamine to ammonia, which is used by the large (or ammonia) chain to synthesize carbamoyl phosphate. Tetramer of heterodimers (alpha,beta)4. Requires Mg(2+) as cofactor. It depends on Mn(2+) as a cofactor.

It carries out the reaction hydrogencarbonate + L-glutamine + 2 ATP + H2O = carbamoyl phosphate + L-glutamate + 2 ADP + phosphate + 2 H(+). The enzyme catalyses hydrogencarbonate + NH4(+) + 2 ATP = carbamoyl phosphate + 2 ADP + phosphate + 2 H(+). It functions in the pathway amino-acid biosynthesis; L-arginine biosynthesis; carbamoyl phosphate from bicarbonate: step 1/1. Its pathway is pyrimidine metabolism; UMP biosynthesis via de novo pathway; (S)-dihydroorotate from bicarbonate: step 1/3. Its function is as follows. Large subunit of the glutamine-dependent carbamoyl phosphate synthetase (CPSase). CPSase catalyzes the formation of carbamoyl phosphate from the ammonia moiety of glutamine, carbonate, and phosphate donated by ATP, constituting the first step of 2 biosynthetic pathways, one leading to arginine and/or urea and the other to pyrimidine nucleotides. The large subunit (synthetase) binds the substrates ammonia (free or transferred from glutamine from the small subunit), hydrogencarbonate and ATP and carries out an ATP-coupled ligase reaction, activating hydrogencarbonate by forming carboxy phosphate which reacts with ammonia to form carbamoyl phosphate. This chain is Carbamoyl phosphate synthase large chain, found in Thermotoga petrophila (strain ATCC BAA-488 / DSM 13995 / JCM 10881 / RKU-1).